A 177-amino-acid polypeptide reads, in one-letter code: ATP synthase subunit delta (177 aa).

Belongs to the ATPase delta chain family. As to quaternary structure, F-type ATPases have 2 components, F(1) - the catalytic core - and F(0) - the membrane proton channel. F(1) has five subunits: alpha(3), beta(3), gamma(1), delta(1), epsilon(1). F(0) has three main subunits: a(1), b(2) and c(10-14). The alpha and beta chains form an alternating ring which encloses part of the gamma chain. F(1) is attached to F(0) by a central stalk formed by the gamma and epsilon chains, while a peripheral stalk is formed by the delta and b chains.

Its subcellular location is the cell inner membrane. F(1)F(0) ATP synthase produces ATP from ADP in the presence of a proton or sodium gradient. F-type ATPases consist of two structural domains, F(1) containing the extramembraneous catalytic core and F(0) containing the membrane proton channel, linked together by a central stalk and a peripheral stalk. During catalysis, ATP synthesis in the catalytic domain of F(1) is coupled via a rotary mechanism of the central stalk subunits to proton translocation. Its function is as follows. This protein is part of the stalk that links CF(0) to CF(1). It either transmits conformational changes from CF(0) to CF(1) or is implicated in proton conduction. The chain is ATP synthase subunit delta from Salmonella agona (strain SL483).